Here is a 74-residue protein sequence, read N- to C-terminus: uncharacterized protein (74 aa).

A helical membrane pass occupies residues 20–40 (IYSYTLLTLLVITLICYLIHI).

The protein belongs to the asfivirus KP93L family.

It is found in the host membrane. This is an uncharacterized protein from African swine fever virus (isolate Tick/South Africa/Pretoriuskop Pr4/1996) (ASFV).